A 776-amino-acid polypeptide reads, in one-letter code: Endonuclease MutS2 (776 aa).

330-337 (GPNTGGKT) contributes to the ATP binding site. The Smr domain maps to 701–776 (LDLRGMRYEE…GSGATIAILK (76 aa)).

This sequence belongs to the DNA mismatch repair MutS family. MutS2 subfamily. Homodimer. Binds to stalled ribosomes, contacting rRNA.

Endonuclease that is involved in the suppression of homologous recombination and thus may have a key role in the control of bacterial genetic diversity. Its function is as follows. Acts as a ribosome collision sensor, splitting the ribosome into its 2 subunits. Detects stalled/collided 70S ribosomes which it binds and splits by an ATP-hydrolysis driven conformational change. Acts upstream of the ribosome quality control system (RQC), a ribosome-associated complex that mediates the extraction of incompletely synthesized nascent chains from stalled ribosomes and their subsequent degradation. Probably generates substrates for RQC. The chain is Endonuclease MutS2 from Lactococcus lactis subsp. cremoris (strain MG1363).